We begin with the raw amino-acid sequence, 832 residues long: tRNA ligase (832 aa).

Lysine 108 (N6-AMP-lysine intermediate) is an active-site residue.

Belongs to the TRL1 family.

The enzyme catalyses ATP + (ribonucleotide)n-3'-hydroxyl + 5'-phospho-(ribonucleotide)m = (ribonucleotide)n+m + AMP + diphosphate.. Its function is as follows. One of the two proteins required for the splicing of precursor tRNA molecules containing introns. The ligation activity requires three enzymatic activities: phosphorylation of the 5' terminus of the 3' half-tRNA in the presence of ATP, opening of the 2'3'-cyclic phosphodiester bond of the 5' half-tRNA leaving a 2'-phosphomonoester and ligation of the two tRNA halves in an ATP-dependent reaction. This chain is tRNA ligase (LIG1), found in Candida albicans (strain SC5314 / ATCC MYA-2876) (Yeast).